The chain runs to 660 residues: Galactocerebrosidase (660 aa).

Residues 1–18 form the signal peptide; that stretch reads MQTHNFLCIISVILGCSA. Substrate-binding residues include Thr-87 and Trp-129. The N-linked (GlcNAc...) asparagine glycan is linked to Asn-147. Asn-175 contributes to the substrate binding site. The active-site Proton donor/acceptor is the Glu-176. Residue Glu-251 is the Nucleophile of the active site. A disulfide bridge links Cys-264 with Cys-371. N-linked (GlcNAc...) asparagine glycans are attached at residues Asn-293 and Asn-356. Arg-373 is a binding site for substrate. Residues Asn-413, Asn-465, Asn-495, Asn-499, Asn-537, and Asn-578 are each glycosylated (N-linked (GlcNAc...) asparagine).

It belongs to the glycosyl hydrolase 59 family.

Its subcellular location is the lysosome. It carries out the reaction a beta-D-galactosyl-(1&lt;-&gt;1')-N-acylsphing-4-enine + H2O = an N-acylsphing-4-enine + D-galactose. The enzyme catalyses beta-D-galactosyl-(1&lt;-&gt;1)-sphing-4-enine + H2O = sphing-4-enine + D-galactose. It catalyses the reaction a D-galactosylceramide + H2O = an N-acyl-sphingoid base + D-galactose. Functionally, hydrolyzes the galactose ester bonds of glycolipids such as galactosylceramide and galactosylsphingosine. In Danio rerio (Zebrafish), this protein is Galactocerebrosidase.